A 198-amino-acid chain; its full sequence is NADH-quinone oxidoreductase subunit B 1 (198 aa).

[4Fe-4S] cluster-binding residues include cysteine 77, cysteine 78, cysteine 142, and cysteine 172.

The protein belongs to the complex I 20 kDa subunit family. NDH-1 is composed of 14 different subunits. Subunits NuoB, C, D, E, F, and G constitute the peripheral sector of the complex. The cofactor is [4Fe-4S] cluster.

Its subcellular location is the cell inner membrane. The catalysed reaction is a quinone + NADH + 5 H(+)(in) = a quinol + NAD(+) + 4 H(+)(out). NDH-1 shuttles electrons from NADH, via FMN and iron-sulfur (Fe-S) centers, to quinones in the respiratory chain. The immediate electron acceptor for the enzyme in this species is believed to be ubiquinone. Couples the redox reaction to proton translocation (for every two electrons transferred, four hydrogen ions are translocated across the cytoplasmic membrane), and thus conserves the redox energy in a proton gradient. The polypeptide is NADH-quinone oxidoreductase subunit B 1 (Rhodopseudomonas palustris (strain ATCC BAA-98 / CGA009)).